Consider the following 387-residue polypeptide: Zinc transporter 7 (387 aa).

The Cytoplasmic segment spans residues 1 to 37; the sequence is MLPLSIKDDEYKPAKFNLVVKLSGWFRSILADKTSRN. A helical transmembrane segment spans residues 38–58; sequence LFFFLCLNLSFAFVELLYGIW. The Lumenal portion of the chain corresponds to 59–67; it reads SNSLGLISD. The helical transmembrane segment at 68–88 threads the bilayer; the sequence is SFHMFFDCTALLAGLAASVIS. Topologically, residues 89-102 are cytoplasmic; it reads RWRSNDSFSYGYVR. The chain crosses the membrane as a helical span at residues 103-123; sequence AEVLAGFVNGLFLIFTAFFIF. The Lumenal segment spans residues 124–140; it reads SEGVERALEPPDVHHDR. A helical transmembrane segment spans residues 141–161; that stretch reads LLPVSIAGLLVNLVGIFVFQH. The his-rich loop stretch occupies residues 161–232; sequence HGGHGHSHGG…HDDQHCHDDH (72 aa). At 162 to 247 the chain is on the cytoplasmic side; that stretch reads GGHGHSHGGD…KGSSKQILQG (86 aa). Residues 167–237 are disordered; that stretch reads SHGGDDHGHS…CHDDHTLTPG (71 aa). A compositionally biased stretch (basic residues) spans 187–201; that stretch reads GHSHGGHGHSHGGHG. 2 stretches are compositionally biased toward basic and acidic residues: residues 202–214 and 221–233; these read HSHESKHGHDHGH and HSHDDQHCHDDHT. The chain crosses the membrane as a helical span at residues 248–268; it reads VFLHIVADTLGSVGVIISAIL. The Lumenal portion of the chain corresponds to 269 to 273; it reads MQKYD. The helical transmembrane segment at 274–294 threads the bilayer; that stretch reads LMIADPICSMLIALLIGVSVV. At 295–387 the chain is on the cytoplasmic side; sequence PLLRESIGIL…LYVQIEVAAM (93 aa).

The protein belongs to the cation diffusion facilitator (CDF) transporter (TC 2.A.4) family. SLC30A subfamily. Homooligomer.

It is found in the golgi apparatus membrane. The protein localises to the cytoplasmic vesicle. The protein resides in the golgi apparatus. Its subcellular location is the trans-Golgi network. It localises to the sarcoplasmic reticulum. It is found in the mitochondrion. The catalysed reaction is Zn(2+)(in) = Zn(2+)(out). Zinc ion transporter mediating zinc entry from the cytosol into the lumen of organelles along the secretory pathway. By contributing to zinc ion homeostasis within the early secretory pathway, regulates the activation and folding of enzymes like alkaline phosphatases. The polypeptide is Zinc transporter 7 (slc30a7) (Danio rerio (Zebrafish)).